Here is a 390-residue protein sequence, read N- to C-terminus: Nuclear receptor subfamily 2 group F member 6 (390 aa).

The segment covering 1–15 has biased composition (gly residues); the sequence is MAMVTGGWGDPGGDT. The interval 1 to 50 is disordered; sequence MAMVTGGWGDPGGDTNGVDKAGGSYPRATEDDSASPPGATSDAEPGDEER. Phosphoserine is present on residues S35 and S41. The segment at residues 54–129 is a DNA-binding region (nuclear receptor); that stretch reads QVDCVVCGDK…VGMRKEAVQR (76 aa). An NR C4-type zinc finger spans residues 57-77; that stretch reads CVVCGDKSSGKHYGVFTCEGC. S84 is modified (phosphoserine). Residues 93-117 form an NR C4-type zinc finger; that stretch reads CRSNRDCQIDQHHRNQCQYCRLKKC. The NR LBD domain occupies 157–380; sequence PVSELIAQLL…TLIRDMLLSG (224 aa). The interval 314–390 is important for dimerization; the sequence is LQEKAQVALT…STFNWPYGSG (77 aa).

The protein belongs to the nuclear hormone receptor family. NR2 subfamily. Binds DNA as dimer; homodimer and heterodimer with NR2F2 and probably NR2F1. Interacts with THRB.

It is found in the nucleus. Its function is as follows. Transcription factor predominantly involved in transcriptional repression. Binds to promoter/enhancer response elements that contain the imperfect 5'-AGGTCA-3' direct or inverted repeats with various spacings which are also recognized by other nuclear hormone receptors. Involved in modulation of hormonal responses. Represses transcriptional activity of the lutropin-choriogonadotropic hormone receptor/LHCGR gene, the renin/REN gene and the oxytocin-neurophysin/OXT gene. Represses the triiodothyronine-dependent and -independent transcriptional activity of the thyroid hormone receptor gene in a cell type-specific manner. The corepressing function towards thyroid hormone receptor beta/THRB involves at least in part the inhibition of THRB binding to triiodothyronine response elements (TREs) by NR2F6. Inhibits NFATC transcription factor DNA binding and subsequently its transcriptional activity. Acts as transcriptional repressor of IL-17 expression in Th-17 differentiated CD4(+) T cells and may be involved in induction and/or maintenance of peripheral immunological tolerance and autoimmunity. Involved in development of forebrain circadian clock; is required early in the development of the locus coeruleus (LC). This Mus musculus (Mouse) protein is Nuclear receptor subfamily 2 group F member 6 (Nr2f6).